The sequence spans 358 residues: Protein-L-isoaspartate O-methyltransferase domain-containing protein 1 (358 aa).

The N-myristoyl glycine moiety is linked to residue G2. S64 is an active-site residue. AdoMet binding motif stretches follow at residues 85–94 (LNLGSGTGYL), 160–164 (YDRIY), and 181–191 (LKVGGILVMPI). The segment at 240 to 250 (VRNLQDLARIY) is BC-box. Residues 300–339 (PLDSEEDERMEDDNKEEEDKDHSEALKPEEPPRNLLREKI) are disordered. A compositionally biased stretch (acidic residues) spans 302–318 (DSEEDERMEDDNKEEED). Basic and acidic residues predominate over residues 319–339 (KDHSEALKPEEPPRNLLREKI). The interval 342-345 (LPLP) is CUL-box.

It belongs to the methyltransferase superfamily. L-isoaspartyl/D-aspartyl protein methyltransferase family. In terms of assembly, component of the probable ECS(PCMTD1) E3 ubiquitin-protein ligase complex, at least composed of CUL5, ELOB, ELOC, RBX2 and PCMTD1.

The protein resides in the cytoplasm. It localises to the membrane. Its function is as follows. Substrate recognition component of an ECS (Elongin BC-CUL5-SOCS-box protein) E3 ubiquitin ligase complex which mediates the ubiquitination and subsequent proteasomal degradation of target proteins. Specifically binds to the methyltransferase cofactor S-adenosylmethionine (AdoMet) via the N-terminal AdoMet binding motif, but does not display methyltransferase activity. May provide an alternate maintenance pathway for modified proteins by acting as a damage-specific E3 ubiquitin ligase adaptor protein. This Gallus gallus (Chicken) protein is Protein-L-isoaspartate O-methyltransferase domain-containing protein 1 (PCMTD1).